Consider the following 872-residue polypeptide: Protein SEY1 (872 aa).

At 1 to 749 (MVANGHFAGV…KRSAIGGITQ (749 aa)) the chain is on the cytoplasmic side. The region spanning 49–294 (GFNYHLISVF…IEGGIFLPEY (246 aa)) is the GB1/RHD3-type G domain. 59 to 66 (GSQSTGKS) serves as a coordination point for GTP. A coiled-coil region spans residues 482-504 (SNYQQELSLYQKDLENIGGQLRR). The segment at 676–704 (LDKWIGHTPSSATPADEEDLTPIGGVDED) is disordered. A compositionally biased stretch (acidic residues) spans 690–704 (ADEEDLTPIGGVDED). A helical membrane pass occupies residues 750 to 770 (VPLYFYGLLLALGWNEIVAVL). Residues 771–773 (RNP) are Lumenal-facing. A helical transmembrane segment spans residues 774 to 794 (AYFLLLFVCAVTAYVTYQLNL). The Cytoplasmic portion of the chain corresponds to 795–872 (WGPIIKMTEA…IDDADDDDDF (78 aa)). The interval 849–872 (NRKSAGGFQNNRSHIDDADDDDDF) is disordered.

The protein belongs to the TRAFAC class dynamin-like GTPase superfamily. GB1/RHD3 GTPase family. RHD3 subfamily.

The protein resides in the endoplasmic reticulum membrane. Functionally, cooperates with the reticulon proteins and tubule-shaping DP1 family proteins to generate and maintain the structure of the tubular endoplasmic reticulum network. Has GTPase activity, which is required for its function in ER organization. The chain is Protein SEY1 from Paracoccidioides brasiliensis (strain Pb03).